The following is a 697-amino-acid chain: Elongation factor G (697 aa).

In terms of domain architecture, tr-type G spans glutamate 8–leucine 282. GTP is bound by residues alanine 17–threonine 24, aspartate 81–histidine 85, and asparagine 135–aspartate 138.

The protein belongs to the TRAFAC class translation factor GTPase superfamily. Classic translation factor GTPase family. EF-G/EF-2 subfamily.

The protein resides in the cytoplasm. Functionally, catalyzes the GTP-dependent ribosomal translocation step during translation elongation. During this step, the ribosome changes from the pre-translocational (PRE) to the post-translocational (POST) state as the newly formed A-site-bound peptidyl-tRNA and P-site-bound deacylated tRNA move to the P and E sites, respectively. Catalyzes the coordinated movement of the two tRNA molecules, the mRNA and conformational changes in the ribosome. This is Elongation factor G from Metamycoplasma arthritidis (strain 158L3-1) (Mycoplasma arthritidis).